Here is a 186-residue protein sequence, read N- to C-terminus: Allergen Fel d 4 (186 aa).

Residues 1–15 (MKLLLLCLGLILVCA) form the signal peptide. 2 N-linked (GlcNAc...) asparagine glycosylation sites follow: Asn51 and Asn66. Cysteines 81 and 171 form a disulfide.

Belongs to the calycin superfamily. Lipocalin family. In terms of tissue distribution, abundant in urine (at protein level).

The protein localises to the secreted. Its function is as follows. May be a pheromone carrier. Acts as a kairomone, detected by the prey vomeronasal organ and inducing fear reactions in mice. The polypeptide is Allergen Fel d 4 (Felis catus (Cat)).